The following is a 450-amino-acid chain: Phosphoglucosamine mutase (450 aa).

Ser101 acts as the Phosphoserine intermediate in catalysis. Residues Ser101, Asp241, Asp243, and Asp245 each coordinate Mg(2+). Phosphoserine is present on Ser101.

This sequence belongs to the phosphohexose mutase family. Mg(2+) serves as cofactor. Post-translationally, activated by phosphorylation.

It catalyses the reaction alpha-D-glucosamine 1-phosphate = D-glucosamine 6-phosphate. In terms of biological role, catalyzes the conversion of glucosamine-6-phosphate to glucosamine-1-phosphate. In Listeria welshimeri serovar 6b (strain ATCC 35897 / DSM 20650 / CCUG 15529 / CIP 8149 / NCTC 11857 / SLCC 5334 / V8), this protein is Phosphoglucosamine mutase.